Here is a 525-residue protein sequence, read N- to C-terminus: Probable protein kinase UbiB (525 aa).

Residues 119 to 501 form the Protein kinase domain; it reads RFDHHPVASA…QRRTNRLLSA (383 aa). ATP-binding positions include 125 to 133 and K151; that span reads VASASIAQV. The active-site Proton acceptor is D286. A helical transmembrane segment spans residues 502 to 522; that stretch reads ALLFIGGFAVGIIATHVLAWL.

Belongs to the ABC1 family. UbiB subfamily.

The protein resides in the cell inner membrane. Its pathway is cofactor biosynthesis; ubiquinone biosynthesis [regulation]. Its function is as follows. Is probably a protein kinase regulator of UbiI activity which is involved in aerobic coenzyme Q (ubiquinone) biosynthesis. The protein is Probable protein kinase UbiB of Ralstonia nicotianae (strain ATCC BAA-1114 / GMI1000) (Ralstonia solanacearum).